The chain runs to 253 residues: Putative B3 domain-containing protein Os03g0619850 (253 aa).

The segment at residues 26–119 (MSCFLIRMTT…CFEVMILDSD (94 aa)) is a DNA-binding region (TF-B3). Disordered stretches follow at residues 126-150 (LKSN…AGPP) and 230-253 (HRDA…EQDS). The span at 230-239 (HRDADQERQM) shows a compositional bias: basic and acidic residues.

Its subcellular location is the nucleus. The protein is Putative B3 domain-containing protein Os03g0619850 of Oryza sativa subsp. japonica (Rice).